A 101-amino-acid chain; its full sequence is Ribonuclease P protein component 1 (101 aa).

Belongs to the eukaryotic/archaeal RNase P protein component 1 family. As to quaternary structure, consists of a catalytic RNA component and at least 4-5 protein subunits.

The protein localises to the cytoplasm. It catalyses the reaction Endonucleolytic cleavage of RNA, removing 5'-extranucleotides from tRNA precursor.. Functionally, part of ribonuclease P, a protein complex that generates mature tRNA molecules by cleaving their 5'-ends. This Methanococcoides burtonii (strain DSM 6242 / NBRC 107633 / OCM 468 / ACE-M) protein is Ribonuclease P protein component 1.